Reading from the N-terminus, the 219-residue chain is Flagellar L-ring protein (219 aa).

Positions 1–14 (MKRLVLISLVLAAG) are cleaved as a signal peptide. C15 carries the N-palmitoyl cysteine lipid modification. Residue C15 is the site of S-diacylglycerol cysteine attachment.

This sequence belongs to the FlgH family. As to quaternary structure, the basal body constitutes a major portion of the flagellar organelle and consists of four rings (L,P,S, and M) mounted on a central rod.

Its subcellular location is the cell outer membrane. The protein localises to the bacterial flagellum basal body. Functionally, assembles around the rod to form the L-ring and probably protects the motor/basal body from shearing forces during rotation. In Dechloromonas aromatica (strain RCB), this protein is Flagellar L-ring protein.